A 341-amino-acid chain; its full sequence is Retinol dehydrogenase 10 (341 aa).

A helical; Signal-anchor membrane pass occupies residues 3–23 (IVVEFFLVTFKVLWAFVLAAA). 40 to 64 (LITGAGSGLGRLFALEFARRRALLV) is a binding site for NADP(+). Serine 197 lines the substrate pocket. Catalysis depends on tyrosine 210, which acts as the Proton acceptor.

This sequence belongs to the short-chain dehydrogenases/reductases (SDR) family. As to expression, detected in retina, entire eyecups and in liver (at protein level).

It is found in the microsome membrane. The protein localises to the endoplasmic reticulum membrane. It carries out the reaction all-trans-retinol + NADP(+) = all-trans-retinal + NADPH + H(+). It participates in cofactor metabolism; retinol metabolism. In terms of biological role, retinol dehydrogenase with a clear preference for NADP. Converts all-trans-retinol to all-trans-retinal. The protein is Retinol dehydrogenase 10 (Rdh10) of Rattus norvegicus (Rat).